A 145-amino-acid chain; its full sequence is Large ribosomal subunit protein uL13 (145 aa).

The protein belongs to the universal ribosomal protein uL13 family. As to quaternary structure, part of the 50S ribosomal subunit.

This protein is one of the early assembly proteins of the 50S ribosomal subunit, although it is not seen to bind rRNA by itself. It is important during the early stages of 50S assembly. This Geobacillus kaustophilus (strain HTA426) protein is Large ribosomal subunit protein uL13.